Here is an 87-residue protein sequence, read N- to C-terminus: Large ribosomal subunit protein bL27 (87 aa).

It belongs to the bacterial ribosomal protein bL27 family.

This chain is Large ribosomal subunit protein bL27, found in Dichelobacter nodosus (strain VCS1703A).